Here is a 249-residue protein sequence, read N- to C-terminus: MNNTIETILNHRSIRSFTDQLLTAEEIDTLVKSAQAASTSSYVQAYSIIGVSDPEKKRELSVLAGNQPYVEKNGHFFVFCADLYRHQQLAEEKGEHISELLENTEMFMVSLIDAALAAQNMSIAAESMGLGICYIGGIRNELDKVTEVLQTPDHVLPLFGLAVGHPANLSGKKPRLPKQAVYHENTYNVNTDDFRHTMNTYDKTISDYYRERTNGKREETWSDQILNFMKQKPRTYLNDYVKEKGFNKN.

It belongs to the flavin oxidoreductase frp family. As to quaternary structure, homodimer.

It catalyses the reaction FMNH2 + NADP(+) = FMN + NADPH + 2 H(+). Reduces FMNH(2) to FMN, with NADPH as reductant. It also reduces nitroaromatic compounds, quinones and azo dyes. The polypeptide is FMN reductase (NADPH) (nfrA1) (Bacillus subtilis (strain 168)).